Reading from the N-terminus, the 143-residue chain is Small ribosomal subunit protein bS6 (143 aa).

Positions 97-143 are disordered; that stretch reads DTEQSLIMKSKDEKGDKHERSERRRRDDEEGDVPAATDTDGDNAEAA. The span at 105-124 shows a compositional bias: basic and acidic residues; the sequence is KSKDEKGDKHERSERRRRDD.

Belongs to the bacterial ribosomal protein bS6 family.

Binds together with bS18 to 16S ribosomal RNA. The polypeptide is Small ribosomal subunit protein bS6 (Xanthomonas oryzae pv. oryzae (strain MAFF 311018)).